The primary structure comprises 192 residues: Pyridoxal 5'-phosphate synthase subunit PdxT (192 aa).

Residue 47–49 coordinates L-glutamine; it reads GES. Cys-79 functions as the Nucleophile in the catalytic mechanism. L-glutamine is bound by residues Arg-106 and 134–135; that span reads IR. Residues His-170 and Glu-172 each act as charge relay system in the active site.

Belongs to the glutaminase PdxT/SNO family. In terms of assembly, in the presence of PdxS, forms a dodecamer of heterodimers. Only shows activity in the heterodimer.

It catalyses the reaction aldehydo-D-ribose 5-phosphate + D-glyceraldehyde 3-phosphate + L-glutamine = pyridoxal 5'-phosphate + L-glutamate + phosphate + 3 H2O + H(+). It carries out the reaction L-glutamine + H2O = L-glutamate + NH4(+). It participates in cofactor biosynthesis; pyridoxal 5'-phosphate biosynthesis. Functionally, catalyzes the hydrolysis of glutamine to glutamate and ammonia as part of the biosynthesis of pyridoxal 5'-phosphate. The resulting ammonia molecule is channeled to the active site of PdxS. The chain is Pyridoxal 5'-phosphate synthase subunit PdxT from Geobacillus sp. (strain WCH70).